Here is a 162-residue protein sequence, read N- to C-terminus: Small ribosomal subunit protein uS5 (162 aa).

Positions 11–74 constitute an S5 DRBM domain; sequence LTDRVVHISR…EQAKKNLIKV (64 aa).

It belongs to the universal ribosomal protein uS5 family. Part of the 30S ribosomal subunit. Contacts proteins S4 and S8.

With S4 and S12 plays an important role in translational accuracy. In terms of biological role, located at the back of the 30S subunit body where it stabilizes the conformation of the head with respect to the body. This chain is Small ribosomal subunit protein uS5, found in Pelobacter propionicus (strain DSM 2379 / NBRC 103807 / OttBd1).